The following is a 210-amino-acid chain: Endonuclease III (210 aa).

One can recognise a HhH domain in the interval 108 to 127 (FKALIKLPGVGRKTANVVLN). Residues Cys187, Cys194, Cys197, and Cys203 each coordinate [4Fe-4S] cluster.

This sequence belongs to the Nth/MutY family. The cofactor is [4Fe-4S] cluster.

The catalysed reaction is 2'-deoxyribonucleotide-(2'-deoxyribose 5'-phosphate)-2'-deoxyribonucleotide-DNA = a 3'-end 2'-deoxyribonucleotide-(2,3-dehydro-2,3-deoxyribose 5'-phosphate)-DNA + a 5'-end 5'-phospho-2'-deoxyribonucleoside-DNA + H(+). In terms of biological role, DNA repair enzyme that has both DNA N-glycosylase activity and AP-lyase activity. The DNA N-glycosylase activity releases various damaged pyrimidines from DNA by cleaving the N-glycosidic bond, leaving an AP (apurinic/apyrimidinic) site. The AP-lyase activity cleaves the phosphodiester bond 3' to the AP site by a beta-elimination, leaving a 3'-terminal unsaturated sugar and a product with a terminal 5'-phosphate. The chain is Endonuclease III from Rickettsia conorii (strain ATCC VR-613 / Malish 7).